A 1064-amino-acid polypeptide reads, in one-letter code: Carbamoyl phosphate synthase large chain (1064 aa).

The segment at 1–401 is carboxyphosphate synthetic domain; that stretch reads MPKRNDIKKI…SLLKAVRSLE (401 aa). ATP is bound by residues R129, R169, G175, G176, E208, I210, E215, G241, V242, H243, Q284, and E298. Residues 133–327 form the ATP-grasp 1 domain; sequence KELCESINEP…IAKMSAKIAI (195 aa). Positions 284, 298, and 300 each coordinate Mg(2+). Mn(2+) is bound by residues Q284, E298, and N300. Residues 402-546 form an oligomerization domain region; it reads IGVFHNEMTE…YSTYEWENES (145 aa). The tract at residues 547-929 is carbamoyl phosphate synthetic domain; the sequence is KRSDKEKIIV…ALYKSFEAAK (383 aa). Residues 671-861 enclose the ATP-grasp 2 domain; it reads EKALQDLDIP…MAQLATQMIL (191 aa). Residues R707, S746, L748, E752, G777, V778, H779, S780, Q820, and E832 each coordinate ATP. 3 residues coordinate Mg(2+): Q820, E832, and N834. Residues Q820, E832, and N834 each coordinate Mn(2+). The 135-residue stretch at 930-1064 folds into the MGS-like domain; that stretch reads LHMADYGSVL…QSRSFTTKNI (135 aa). The interval 930-1064 is allosteric domain; the sequence is LHMADYGSVL…QSRSFTTKNI (135 aa).

This sequence belongs to the CarB family. In terms of assembly, composed of two chains; the small (or glutamine) chain promotes the hydrolysis of glutamine to ammonia, which is used by the large (or ammonia) chain to synthesize carbamoyl phosphate. Tetramer of heterodimers (alpha,beta)4. Mg(2+) is required as a cofactor. Requires Mn(2+) as cofactor.

It catalyses the reaction hydrogencarbonate + L-glutamine + 2 ATP + H2O = carbamoyl phosphate + L-glutamate + 2 ADP + phosphate + 2 H(+). The enzyme catalyses hydrogencarbonate + NH4(+) + 2 ATP = carbamoyl phosphate + 2 ADP + phosphate + 2 H(+). It functions in the pathway amino-acid biosynthesis; L-arginine biosynthesis; carbamoyl phosphate from bicarbonate: step 1/1. It participates in pyrimidine metabolism; UMP biosynthesis via de novo pathway; (S)-dihydroorotate from bicarbonate: step 1/3. Its function is as follows. Large subunit of the glutamine-dependent carbamoyl phosphate synthetase (CPSase). CPSase catalyzes the formation of carbamoyl phosphate from the ammonia moiety of glutamine, carbonate, and phosphate donated by ATP, constituting the first step of 2 biosynthetic pathways, one leading to arginine and/or urea and the other to pyrimidine nucleotides. The large subunit (synthetase) binds the substrates ammonia (free or transferred from glutamine from the small subunit), hydrogencarbonate and ATP and carries out an ATP-coupled ligase reaction, activating hydrogencarbonate by forming carboxy phosphate which reacts with ammonia to form carbamoyl phosphate. This Lactococcus lactis subsp. cremoris (strain MG1363) protein is Carbamoyl phosphate synthase large chain.